Consider the following 117-residue polypeptide: Protein YchN (117 aa).

The protein to M.jannaschii MJ0989. Homohexamer. The hexamer is formed by a dimer of trimers.

This chain is Protein YchN (ychN), found in Escherichia coli O157:H7.